The sequence spans 127 residues: uncharacterized protein (127 aa).

The next 2 helical transmembrane spans lie at 13–35 (ILLL…GIIF) and 57–81 (AVLI…IMIW).

The protein resides in the cell membrane. This is an uncharacterized protein from Mycoplasma genitalium (strain ATCC 33530 / DSM 19775 / NCTC 10195 / G37) (Mycoplasmoides genitalium).